Here is a 369-residue protein sequence, read N- to C-terminus: 1-aminocyclopropane-1-carboxylate oxidase homolog 3 (369 aa).

Residues 217 to 318 (KGLLMLSHYY…VSVACFFTTG (102 aa)) form the Fe2OG dioxygenase domain. 3 residues coordinate Fe cation: H241, D243, and H297.

This sequence belongs to the iron/ascorbate-dependent oxidoreductase family. Requires Fe cation as cofactor.

This chain is 1-aminocyclopropane-1-carboxylate oxidase homolog 3, found in Arabidopsis thaliana (Mouse-ear cress).